Consider the following 290-residue polypeptide: Large ribosomal subunit protein uL2m (290 aa).

Belongs to the universal ribosomal protein uL2 family. As to quaternary structure, probably part of the large ribosomal subunit.

It localises to the hydrogenosome. In Nyctotherus ovalis, this protein is Large ribosomal subunit protein uL2m (rpl2).